We begin with the raw amino-acid sequence, 1271 residues long: SR-related and CTD-associated factor 8 (1271 aa).

A CID domain is found at 1 to 139 (MEAVKTFNSE…PLLDMAAGIP (139 aa)). Threonine 6 carries the phosphothreonine modification. Residue lysine 18 forms a Glycyl lysine isopeptide (Lys-Gly) (interchain with G-Cter in SUMO1) linkage. A compositionally biased stretch (basic and acidic residues) spans 270-283 (GEDSEHSEEPKKEI). Disordered stretches follow at residues 270–289 (GEDS…SQLS), 322–354 (QQQP…SQQH), and 384–468 (EEVF…PPIR). Serine 273 is modified (phosphoserine). Polar residues predominate over residues 327–354 (KATPQDSQEGTFGSEHSASPSQGSSQQH). The span at 394–443 (VAVRSRSRTHSRSRSRSPRKRRSRSRSGSRKRKHRKRSRSRSRERKRKSS) shows a compositional bias: basic residues. Over residues 447–461 (SSERRAREREKERQK) the composition is skewed to basic and acidic residues. The 75-residue stretch at 477–551 (TTLWVGQVDK…KVIKIAWALN (75 aa)) folds into the RRM domain. Phosphothreonine is present on threonine 615. Serine 617 and serine 779 each carry phosphoserine. The disordered stretch occupies residues 899–918 (TQPPAGPQNLPPLSIPNQRM). Pro residues predominate over residues 902 to 912 (PAGPQNLPPLS). An asymmetric dimethylarginine mark is found at arginine 917, arginine 927, and arginine 938. Pro residues-rich tracts occupy residues 945–956 (GIPPQRGIPPPS) and 963–972 (HPPPRGPFPP). A disordered region spans residues 945–1064 (GIPPQRGIPP…DGRDHFGRPP (120 aa)). 2 stretches are compositionally biased toward basic and acidic residues: residues 1011-1027 (EGDR…RESI) and 1034-1064 (DVRD…GRPP). Arginine 1073 carries the post-translational modification Asymmetric dimethylarginine. The tract at residues 1198-1271 (YFEGATSQRK…VVESTETEGT (74 aa)) is disordered. A compositionally biased stretch (acidic residues) spans 1255 to 1271 (ADIESEPVVESTETEGT).

As to quaternary structure, interacts with POLR2A; via C-terminal heptapeptide repeat domain (CTD) phosphorylated at 'Ser-2' and 'Ser-5'. Identified in a complex with CDC5L and other spliceosomal proteins.

The protein resides in the nucleus. It localises to the nucleus matrix. Its function is as follows. Anti-terminator protein required to prevent early mRNA termination during transcription. Together with SCAF4, acts by suppressing the use of early, alternative poly(A) sites, thereby preventing the accumulation of non-functional truncated proteins. Mechanistically, associates with the phosphorylated C-terminal heptapeptide repeat domain (CTD) of the largest RNA polymerase II subunit (POLR2A), and subsequently binds nascent RNA upstream of early polyadenylation sites to prevent premature mRNA transcript cleavage and polyadenylation. Independently of SCAF4, also acts as a positive regulator of transcript elongation. This chain is SR-related and CTD-associated factor 8, found in Homo sapiens (Human).